A 95-amino-acid chain; its full sequence is LSM complex subunit LSM2 (95 aa).

The 75-residue stretch at 2–76 (LFFSFFKTLV…VRYVYLNKNM (75 aa)) folds into the Sm domain.

The protein belongs to the snRNP Sm proteins family. In terms of assembly, component of the heptameric LSM1-LSM7 complex that forms a seven-membered ring structure with a donut shape. The LSm subunits are arranged in the order LSM1, LSM2, LSM3, LSM6, LSM5, LSM7 and LSM4. Except for LSM1, where a C-terminal helix crosses the ring structure to form additional interactions with LSM3 and LSM6, each subunit interacts only with its two neighboring subunits. The LSM1-LSM7 complex interacts with PAT1; within the complex PAT1 has direct interactions with LSM2 and LSM3. The LSM1-LSM7 complex interacts with XRN1. Component of the heptameric LSM2-LSM8 complex that forms a seven-membered ring structure with a donut shape; an RNA strand can pass through the hole in the center of the ring structure. The LSm subunits are arranged in the order LSM8, LSM2, LSM3, LSM6, LSM5, LSM7 and LSM4. Interacts with U6 snRNA SNR6 and chaperone PRP24; to promote formation of the U4/U6-U5 tri-snRNP (small nuclear ribonucleoprotein) complex, the LSM2-LSM8 complex preferentially binds U6 snRNA that has been modified to contain a non-cyclic 3' phosphate. Component of the spliceosome U4/U6-U5 tri-snRNP complex composed of the U4, U6 and U5 snRNAs and at least PRP3, PRP4, PRP6, PRP8, PRP18, PRP31, PRP38, SNU13, SNU23, SNU66, SNU114, SPP381, SMB1, SMD1, SMD2, SMD3, SMX2, SMX3, LSM2, LSM3, LSM4, LSM5, LSM6, LSM7, LSM8, BRR2 and DIB1. May be found in a complex comprising LSM2-LSM7 without LSM1 or LSM8; the complex associates with pre-P RNA and snoRNA SNR5.

It localises to the nucleus. The protein localises to the nucleolus. The protein resides in the cytoplasm. Its function is as follows. Component of LSm protein complexes, which are involved in RNA processing and may function in a chaperone-like manner. Component of the cytoplasmic LSM1-LSM7 complex which is involved in mRNA degradation by activating the decapping step. Together with PAT1, the LSM1-LSM7 complex binds to osmotic stress-activated mRNAs to attenuate the osmotic stress response, probably by limiting ribosome access to the mRNA and consequently translation. Component of the nuclear LSM2-LSM8 complex, which is involved in spliceosome assembly. The LSM2-LSM8 complex plays a role in the biogenesis of the spliceosomal U4/U6-U5 tri-snRNP complex by accelerating PRP24-mediated annealing of U4/U6 di-snRNA. The LSM2-LSM8 complex binds U6 snRNA terminating with a non-cyclic 3' phosphate group. LSM2-LSM8 is probably also involved in degradation of nuclear pre-mRNA by targeting them for decapping. LSM2-LSM8 could be involved in processing of pre-tRNAs, pre-rRNAs and U3 snoRNA, although involvement may be indirect. In a complex that probably contains LSM2-LSM7, but not LSM1 or LSM8, associates with the precursor of the RNA component of RNase P (pre-P RNA) and may be involved in maturing pre-P RNA; the complex also associates with snoRNA SNR5. The sequence is that of LSM complex subunit LSM2 (LSM2) from Saccharomyces cerevisiae (strain ATCC 204508 / S288c) (Baker's yeast).